The primary structure comprises 90 residues: Bombyxin D-1 (90 aa).

An N-terminal signal peptide occupies residues 1–18; sequence MKLLGFFLSWVSVCAIVS. Intrachain disulfides connect Cys27–Cys77, Cys39–Cys90, and Cys76–Cys81. Positions 48–68 are cleaved as a propeptide — c peptide like; it reads SVAHYAGYGWPLLPSLSEERG.

This sequence belongs to the insulin family. Heterodimer of a B chain and an A chain linked by two disulfide bonds.

It localises to the secreted. Its function is as follows. Brain peptide responsible for activation of prothoracic glands to produce ecdysone in insects. This Bombyx mori (Silk moth) protein is Bombyxin D-1 (BBXD1).